The following is a 472-amino-acid chain: Chromosomal replication initiator protein DnaA (472 aa).

Residues 1 to 73 form a domain I, interacts with DnaA modulators region; the sequence is MSNMEHDRWS…LTCWQAELPE (73 aa). The segment at 73–128 is domain II; sequence EVCRIDLTVRSPMRAAVAKEAAAPVEHRRAEHRPATETRSHATVPASSNHDALGGS. A disordered region spans residues 92–127; the sequence is EAAAPVEHRRAEHRPATETRSHATVPASSNHDALGG. Positions 97-112 are enriched in basic and acidic residues; that stretch reads VEHRRAEHRPATETRS. Residues 129 to 351 are domain III, AAA+ region; sequence PLDPRLTFAS…GAINRLLAHS (223 aa). ATP-binding residues include Gly-176, Gly-178, Lys-179, and Thr-180. The tract at residues 352–472 is domain IV, binds dsDNA; that stretch reads KLNAQPVTLE…VDSLKRQLQE (121 aa).

Belongs to the DnaA family. Oligomerizes as a right-handed, spiral filament on DNA at oriC.

It localises to the cytoplasm. Functionally, plays an essential role in the initiation and regulation of chromosomal replication. ATP-DnaA binds to the origin of replication (oriC) to initiate formation of the DNA replication initiation complex once per cell cycle. Binds the DnaA box (a 9 base pair repeat at the origin) and separates the double-stranded (ds)DNA. Forms a right-handed helical filament on oriC DNA; dsDNA binds to the exterior of the filament while single-stranded (ss)DNA is stabiized in the filament's interior. The ATP-DnaA-oriC complex binds and stabilizes one strand of the AT-rich DNA unwinding element (DUE), permitting loading of DNA polymerase. After initiation quickly degrades to an ADP-DnaA complex that is not apt for DNA replication. Binds acidic phospholipids. This Rhodopseudomonas palustris (strain HaA2) protein is Chromosomal replication initiator protein DnaA.